The primary structure comprises 468 residues: Ammonium transporter Amt2 (468 aa).

12 helical membrane-spanning segments follow: residues 1-21 (MVGR…TAGA), 39-59 (FVWA…FAML), 77-97 (LMDF…LMMG), 123-143 (LWFF…GSIA), 156-176 (AVVS…GGWL), 194-214 (FAGS…AVML), 236-256 (LAFA…FNAG), 268-288 (IIAS…MAIT), 297-317 (VGMT…PCAW), 321-341 (WSSV…YWWL), 350-370 (VGAI…LGIF), and 400-420 (LISA…LFWI).

The protein belongs to the ammonia transporter channel (TC 1.A.11.2) family. In terms of assembly, homotrimer.

It is found in the cell membrane. Involved in the uptake of ammonium/ammonia (NH(4)(+)/NH(3)). Transport is electrogenic. This is Ammonium transporter Amt2 from Archaeoglobus fulgidus (strain ATCC 49558 / DSM 4304 / JCM 9628 / NBRC 100126 / VC-16).